The sequence spans 526 residues: ATP synthase subunit alpha (526 aa).

171–178 contacts ATP; the sequence is GDRQTGKT.

Belongs to the ATPase alpha/beta chains family. In terms of assembly, F-type ATPases have 2 components, CF(1) - the catalytic core - and CF(0) - the membrane proton channel. CF(1) has five subunits: alpha(3), beta(3), gamma(1), delta(1), epsilon(1). CF(0) has three main subunits: a(1), b(2) and c(9-12). The alpha and beta chains form an alternating ring which encloses part of the gamma chain. CF(1) is attached to CF(0) by a central stalk formed by the gamma and epsilon chains, while a peripheral stalk is formed by the delta and b chains.

Its subcellular location is the cell membrane. The enzyme catalyses ATP + H2O + 4 H(+)(in) = ADP + phosphate + 5 H(+)(out). In terms of biological role, produces ATP from ADP in the presence of a proton gradient across the membrane. The alpha chain is a regulatory subunit. In Christiangramia forsetii (strain DSM 17595 / CGMCC 1.15422 / KT0803) (Gramella forsetii), this protein is ATP synthase subunit alpha.